A 97-amino-acid chain; its full sequence is Putative septation protein SpoVG (97 aa).

This sequence belongs to the SpoVG family.

Essential for sporulation. Interferes with or is a negative regulator of the pathway leading to asymmetric septation. This Bacillus velezensis (strain DSM 23117 / BGSC 10A6 / LMG 26770 / FZB42) (Bacillus amyloliquefaciens subsp. plantarum) protein is Putative septation protein SpoVG.